The chain runs to 190 residues: Large ribosomal subunit protein bL9 (190 aa).

This sequence belongs to the bacterial ribosomal protein bL9 family.

In terms of biological role, binds to the 23S rRNA. In Methylorubrum populi (strain ATCC BAA-705 / NCIMB 13946 / BJ001) (Methylobacterium populi), this protein is Large ribosomal subunit protein bL9.